Consider the following 150-residue polypeptide: Placenta-specific protein 4 (150 aa).

In terms of tissue distribution, expressed in placental syncytiotrophoblast and choriocarcinoma cells.

This is Placenta-specific protein 4 (PLAC4) from Homo sapiens (Human).